Here is a 453-residue protein sequence, read N- to C-terminus: Adenylyltransferase and sulfurtransferase MOCS3 (453 aa).

A Phosphothreonine modification is found at Thr62. Residues Gly101, Asp122, 129 to 133, Lys146, and 190 to 191 each bind ATP; these read SNFHR and DN. Zn(2+)-binding residues include Cys231 and Cys234. Cys248 serves as the catalytic Glycyl thioester intermediate; for adenylyltransferase activity. 2 residues coordinate Zn(2+): Cys306 and Cys309. The Rhodanese domain maps to 355-451; the sequence is QAQPHLLIDV…WTNSVDPSFP (97 aa). Cys410 acts as the Cysteine persulfide intermediate; for sulfurtransferase activity in catalysis.

In the N-terminal section; belongs to the HesA/MoeB/ThiF family. UBA4 subfamily. Requires Zn(2+) as cofactor.

It localises to the cytoplasm. It is found in the cytosol. It carries out the reaction [molybdopterin-synthase sulfur-carrier protein]-C-terminal Gly-Gly + ATP + H(+) = [molybdopterin-synthase sulfur-carrier protein]-C-terminal Gly-Gly-AMP + diphosphate. The enzyme catalyses [molybdopterin-synthase sulfur-carrier protein]-C-terminal Gly-Gly-AMP + S-sulfanyl-L-cysteinyl-[cysteine desulfurase] + AH2 = [molybdopterin-synthase sulfur-carrier protein]-C-terminal-Gly-aminoethanethioate + L-cysteinyl-[cysteine desulfurase] + A + AMP + 2 H(+). The protein operates within tRNA modification; 5-methoxycarbonylmethyl-2-thiouridine-tRNA biosynthesis. It participates in cofactor biosynthesis; molybdopterin biosynthesis. In terms of biological role, plays a central role in 2-thiolation of mcm(5)S(2)U at tRNA wobble positions of cytosolic tRNA(Lys), tRNA(Glu) and tRNA(Gln). Also essential during biosynthesis of the molybdenum cofactor. Acts by mediating the C-terminal thiocarboxylation of sulfur carriers URM1 and MOCS2A. Its N-terminus first activates URM1 and MOCS2A as acyl-adenylates (-COAMP), then the persulfide sulfur on the catalytic cysteine is transferred to URM1 and MOCS2A to form thiocarboxylation (-COSH) of their C-terminus. The reaction probably involves hydrogen sulfide that is generated from the persulfide intermediate and that acts as a nucleophile towards URM1 and MOCS2A. Subsequently, a transient disulfide bond is formed. Does not use thiosulfate as sulfur donor; NFS1 probably acting as a sulfur donor for thiocarboxylation reactions. This chain is Adenylyltransferase and sulfurtransferase MOCS3, found in Drosophila yakuba (Fruit fly).